Consider the following 372-residue polypeptide: N-methyl-L-tryptophan oxidase (372 aa).

Aspartate 4–histidine 34 is an FAD binding site. Cysteine 308 carries the S-8alpha-FAD cysteine modification.

It belongs to the MSOX/MTOX family. MTOX subfamily. In terms of assembly, monomer. FAD is required as a cofactor.

The catalysed reaction is N(alpha)-methyl-L-tryptophan + O2 + H2O = L-tryptophan + formaldehyde + H2O2. Catalyzes the oxidative demethylation of N-methyl-L-tryptophan. The sequence is that of N-methyl-L-tryptophan oxidase from Escherichia coli O9:H4 (strain HS).